Reading from the N-terminus, the 122-residue chain is Large ribosomal subunit protein bL12 (122 aa).

Belongs to the bacterial ribosomal protein bL12 family. Homodimer. Part of the ribosomal stalk of the 50S ribosomal subunit. Forms a multimeric L10(L12)X complex, where L10 forms an elongated spine to which 2 to 4 L12 dimers bind in a sequential fashion. Binds GTP-bound translation factors.

Its function is as follows. Forms part of the ribosomal stalk which helps the ribosome interact with GTP-bound translation factors. Is thus essential for accurate translation. The chain is Large ribosomal subunit protein bL12 from Glaesserella parasuis serovar 5 (strain SH0165) (Haemophilus parasuis).